The primary structure comprises 538 residues: Chaperonin GroEL (538 aa).

Residues 29 to 32, 86 to 90, G413, 476 to 478, and D492 contribute to the ATP site; these read TIGP, DGTTT, and NAA.

This sequence belongs to the chaperonin (HSP60) family. As to quaternary structure, forms a cylinder of 14 subunits composed of two heptameric rings stacked back-to-back. Interacts with the co-chaperonin GroES.

It localises to the cytoplasm. It catalyses the reaction ATP + H2O + a folded polypeptide = ADP + phosphate + an unfolded polypeptide.. Its function is as follows. Together with its co-chaperonin GroES, plays an essential role in assisting protein folding. The GroEL-GroES system forms a nano-cage that allows encapsulation of the non-native substrate proteins and provides a physical environment optimized to promote and accelerate protein folding. The chain is Chaperonin GroEL from Staphylococcus aureus (strain NCTC 8325 / PS 47).